The following is a 129-amino-acid chain: M-zodatoxin-Lt8c (129 aa).

The signal sequence occupies residues 1–20; sequence MKYFVVALALVAAFACIAES. Positions 21 to 60 are excised as a propeptide; it reads KPAESEHELAEVEEENELADLEDAVWLEHLADLSDLEEAR. The Processing quadruplet motif motif lies at 57-60; the sequence is EEAR.

Post-translationally, cleavage of the propeptide depends on the processing quadruplet motif (XXXR, with at least one of X being E). In terms of tissue distribution, expressed by the venom gland.

The protein localises to the secreted. In terms of biological role, insecticidal, cytolytic and antimicrobial peptide. Forms voltage-dependent, ion-permeable channels in membranes. At high concentration causes cell membrane lysis. The polypeptide is M-zodatoxin-Lt8c (cit 1-3) (Lachesana tarabaevi (Spider)).